The chain runs to 303 residues: Kanosamine kinase (303 aa).

It belongs to the ROK (NagC/XylR) family.

The enzyme catalyses kanosamine + ATP = D-kanosamine 6-phosphate + ADP + H(+). Its pathway is antibiotic biosynthesis; rifamycin B biosynthesis. Its activity is regulated as follows. Inhibited by Zn(2+), Cu(2+), and Fe(2+). Its function is as follows. Involved in the biosynthesis of 3-amino-5-hydroxybenzoate (AHBA), a compound that then serves as the starter unit for the assembly of a polyketide during the biosynthesis of rifamycin B and other ansamycin antibiotics. Catalyzes only the phosphorylation of kanosamine to yield kanosamine 6-phosphate. This chain is Kanosamine kinase (rifN), found in Amycolatopsis mediterranei (strain S699) (Nocardia mediterranei).